A 296-amino-acid polypeptide reads, in one-letter code: Phosphatidylglycerol--prolipoprotein diacylglyceryl transferase (296 aa).

Helical transmembrane passes span Trp-28 to Ala-48, Phe-72 to Tyr-92, Gly-110 to Trp-130, and Leu-139 to Ile-159. Arg-160 serves as a coordination point for a 1,2-diacyl-sn-glycero-3-phospho-(1'-sn-glycerol). 3 helical membrane-spanning segments follow: residues Val-197–Tyr-217, Gly-226–Phe-246, and Gly-263–Leu-283.

Belongs to the Lgt family.

It is found in the cell inner membrane. The catalysed reaction is L-cysteinyl-[prolipoprotein] + a 1,2-diacyl-sn-glycero-3-phospho-(1'-sn-glycerol) = an S-1,2-diacyl-sn-glyceryl-L-cysteinyl-[prolipoprotein] + sn-glycerol 1-phosphate + H(+). Its pathway is protein modification; lipoprotein biosynthesis (diacylglyceryl transfer). Catalyzes the transfer of the diacylglyceryl group from phosphatidylglycerol to the sulfhydryl group of the N-terminal cysteine of a prolipoprotein, the first step in the formation of mature lipoproteins. The chain is Phosphatidylglycerol--prolipoprotein diacylglyceryl transferase from Chlamydia caviae (strain ATCC VR-813 / DSM 19441 / 03DC25 / GPIC) (Chlamydophila caviae).